Consider the following 176-residue polypeptide: Nucleoside triphosphate/diphosphate phosphatase (176 aa).

The active-site Proton donor is arginine 23. The Mg(2+) site is built by asparagine 87, aspartate 103, aspartate 105, aspartate 107, aspartate 120, and glutamate 123.

It belongs to the Ntdp family. It depends on Mg(2+) as a cofactor.

The enzyme catalyses a ribonucleoside 5'-triphosphate + H2O = a ribonucleoside 5'-diphosphate + phosphate + H(+). It carries out the reaction a ribonucleoside 5'-diphosphate + H2O = a ribonucleoside 5'-phosphate + phosphate + H(+). In terms of biological role, has nucleoside phosphatase activity towards nucleoside triphosphates and nucleoside diphosphates. This Bacillus cereus (strain AH820) protein is Nucleoside triphosphate/diphosphate phosphatase.